The chain runs to 127 residues: Two-component response regulator ORR41 (127 aa).

Residues 7 to 125 enclose the Response regulatory domain; that stretch reads RVLLVEDEEI…KLGVILAKFR (119 aa). Residue D60 is modified to 4-aspartylphosphate.

This sequence belongs to the ARR family. Type-C subfamily. In terms of processing, two-component system major event consists of a His-to-Asp phosphorelay between a sensor histidine kinase (HK) and a response regulator (RR). In plants, the His-to-Asp phosphorelay involves an additional intermediate named Histidine-containing phosphotransfer protein (HPt). This multistep phosphorelay consists of a His-Asp-His-Asp sequential transfer of a phosphate group between first a His and an Asp of the HK protein, followed by the transfer to a conserved His of the HPt protein and finally the transfer to an Asp in the receiver domain of the RR protein.

Its function is as follows. Functions as a response regulator involved in His-to-Asp phosphorelay signal transduction system. Phosphorylation of the Asp residue in the receiver domain activates the ability of the protein to promote the transcription of target genes. May directly activate some type-A response regulators in response to cytokinins. This is Two-component response regulator ORR41 from Oryza sativa subsp. japonica (Rice).